A 173-amino-acid chain; its full sequence is NADH-ubiquinone oxidoreductase chain 6 (173 aa).

The next 5 membrane-spanning stretches (helical) occupy residues 1 to 21, 27 to 47, 53 to 73, 86 to 106, and 139 to 159; these read MTYI…AVAS, FAAL…VGYG, LVLF…SAAL, SVLG…GWFW, and YGGG…FVVL.

Belongs to the complex I subunit 6 family.

It is found in the mitochondrion membrane. It carries out the reaction a ubiquinone + NADH + 5 H(+)(in) = a ubiquinol + NAD(+) + 4 H(+)(out). In terms of biological role, core subunit of the mitochondrial membrane respiratory chain NADH dehydrogenase (Complex I) that is believed to belong to the minimal assembly required for catalysis. Complex I functions in the transfer of electrons from NADH to the respiratory chain. The immediate electron acceptor for the enzyme is believed to be ubiquinone. The sequence is that of NADH-ubiquinone oxidoreductase chain 6 (MT-ND6) from Salmo salar (Atlantic salmon).